A 578-amino-acid chain; its full sequence is Kelch repeat-containing protein kel-10 (578 aa).

The BTB domain maps to 51-118 (PTVTLVLRNN…PKAFEQGIKP (68 aa)). Positions 158–236 (IKIFRLALLY…NSPLQSDRMA (79 aa)) constitute a BACK domain. 6 Kelch repeats span residues 265–315 (AIVC…VVED), 316–362 (KLIV…RIND), 368–414 (LIFA…TIDN), 416–462 (IVVI…SIMN), 464–510 (VCMI…QMDT), and 512–558 (SIYV…TLSD).

This chain is Kelch repeat-containing protein kel-10, found in Caenorhabditis elegans.